The primary structure comprises 38 residues: Large ribosomal subunit protein bL36 (38 aa).

The protein belongs to the bacterial ribosomal protein bL36 family.

This chain is Large ribosomal subunit protein bL36, found in Flavobacterium psychrophilum (strain ATCC 49511 / DSM 21280 / CIP 103535 / JIP02/86).